Here is a 207-residue protein sequence, read N- to C-terminus: MSGIPEITAYPLPTAQQLPANLARWSLEPRRAVLLVHDMQRYFLRPLPESLRAGLVANAARLRRWCVEQGVQIAYTAQPGSMTEEQRGLLKDFWGPGMRASPADREVVEELAPGPDDWLLTKWRYSAFFHSDLLQRMRAAGRDQLVLCGVYAHVGVLISTVDAYSNDIQPFLVADAIADFSEAHHRMALEYAASRCAMVVTTDEVLE.

Residue Asp-38 is the Proton donor of the active site. Substrate is bound by residues Gln-78, Arg-87, Lys-122, and 151 to 155 (YAHVG).

It belongs to the isochorismatase family. In terms of assembly, homodimer.

It catalyses the reaction (2S)-2-amino-4-deoxychorismate + H2O = (5S,6S)-6-amino-5-hydroxycyclohexa-1,3-diene-1-carboxyate + pyruvate. The protein operates within antibiotic biosynthesis; phenazine biosynthesis. Involved in the biosynthesis of the antibiotic phenazine, a nitrogen-containing heterocyclic molecule. PhzD1 (operon phzA1B1C1E1F1G1) has a role in the biosynthesis of the phenazine during planktonic growth. Catalyzes the hydrolysis of the vinyl ether functional group of 2-amino-2-deoxyisochorismate (ADIC), yielding pyruvate and trans-2,3-dihydro-3-hydroxyanthranilic acid (DHHA). Also able to act on isochorismate, chorismate and 4-amino-4-deoxychorismate (ADC) as substrates. This is Phenazine biosynthesis protein PhzD1 from Pseudomonas aeruginosa (strain ATCC 15692 / DSM 22644 / CIP 104116 / JCM 14847 / LMG 12228 / 1C / PRS 101 / PAO1).